The following is a 414-amino-acid chain: Glutamyl-tRNA reductase (414 aa).

Residues 51–54 (TCNR), Ser107, 112–114 (EYE), and Gln118 contribute to the substrate site. Cys52 functions as the Nucleophile in the catalytic mechanism. 187–192 (GAGEIG) serves as a coordination point for NADP(+).

Belongs to the glutamyl-tRNA reductase family. Homodimer.

It carries out the reaction (S)-4-amino-5-oxopentanoate + tRNA(Glu) + NADP(+) = L-glutamyl-tRNA(Glu) + NADPH + H(+). It functions in the pathway porphyrin-containing compound metabolism; protoporphyrin-IX biosynthesis; 5-aminolevulinate from L-glutamyl-tRNA(Glu): step 1/2. Catalyzes the NADPH-dependent reduction of glutamyl-tRNA(Glu) to glutamate 1-semialdehyde (GSA). This chain is Glutamyl-tRNA reductase, found in Sulfolobus acidocaldarius (strain ATCC 33909 / DSM 639 / JCM 8929 / NBRC 15157 / NCIMB 11770).